The sequence spans 277 residues: 4-hydroxy-tetrahydrodipicolinate reductase (277 aa).

Residue 9–14 (GATGRM) coordinates NAD(+). Lysine 37 provides a ligand contact to NADP(+). 75–77 (GTS) is an NAD(+) binding site. The Proton donor/acceptor role is filled by histidine 132. Catalysis depends on lysine 136, which acts as the Proton donor. 142–143 (GT) provides a ligand contact to (S)-2,3,4,5-tetrahydrodipicolinate. 2 disordered regions span residues 154-173 (ARGA…ARGQ) and 247-277 (ERAA…VTSA). Over residues 250–265 (AQAAAGDAPSGPVDDG) the composition is skewed to low complexity.

This sequence belongs to the DapB family.

Its subcellular location is the cytoplasm. It carries out the reaction (S)-2,3,4,5-tetrahydrodipicolinate + NAD(+) + H2O = (2S,4S)-4-hydroxy-2,3,4,5-tetrahydrodipicolinate + NADH + H(+). The enzyme catalyses (S)-2,3,4,5-tetrahydrodipicolinate + NADP(+) + H2O = (2S,4S)-4-hydroxy-2,3,4,5-tetrahydrodipicolinate + NADPH + H(+). It functions in the pathway amino-acid biosynthesis; L-lysine biosynthesis via DAP pathway; (S)-tetrahydrodipicolinate from L-aspartate: step 4/4. Catalyzes the conversion of 4-hydroxy-tetrahydrodipicolinate (HTPA) to tetrahydrodipicolinate. The chain is 4-hydroxy-tetrahydrodipicolinate reductase from Clavibacter michiganensis subsp. michiganensis (strain NCPPB 382).